The following is a 428-amino-acid chain: Enolase (428 aa).

Gln163 is a binding site for (2R)-2-phosphoglycerate. The active-site Proton donor is the Glu205. Residues Asp242, Glu285, and Asp312 each contribute to the Mg(2+) site. (2R)-2-phosphoglycerate-binding residues include Lys337, Arg366, Ser367, and Lys388. The active-site Proton acceptor is Lys337.

This sequence belongs to the enolase family. Mg(2+) serves as cofactor.

The protein resides in the cytoplasm. Its subcellular location is the secreted. It is found in the cell surface. The enzyme catalyses (2R)-2-phosphoglycerate = phosphoenolpyruvate + H2O. The protein operates within carbohydrate degradation; glycolysis; pyruvate from D-glyceraldehyde 3-phosphate: step 4/5. Functionally, catalyzes the reversible conversion of 2-phosphoglycerate (2-PG) into phosphoenolpyruvate (PEP). It is essential for the degradation of carbohydrates via glycolysis. The sequence is that of Enolase from Rhodopirellula baltica (strain DSM 10527 / NCIMB 13988 / SH1).